Reading from the N-terminus, the 282-residue chain is Aldo-keto reductase ML1669 (282 aa).

Y57 (proton donor) is an active-site residue. Residues L197, V235, R237, S238, A239, S246, N247, and R273 each contribute to the NADPH site.

It belongs to the aldo/keto reductase family.

The chain is Aldo-keto reductase ML1669 from Mycobacterium leprae (strain TN).